The following is a 501-amino-acid chain: Ribose import ATP-binding protein RbsA (501 aa).

ABC transporter domains lie at 6–242 and 253–495; these read LQLS…VGRK and KHGE…VGKK. 38 to 45 is an ATP binding site; sequence GENGAGKS.

This sequence belongs to the ABC transporter superfamily. Ribose importer (TC 3.A.1.2.1) family. In terms of assembly, the complex is composed of an ATP-binding protein (RbsA), two transmembrane proteins (RbsC) and a solute-binding protein (RbsB).

It localises to the cell inner membrane. It catalyses the reaction D-ribose(out) + ATP + H2O = D-ribose(in) + ADP + phosphate + H(+). Functionally, part of the ABC transporter complex RbsABC involved in ribose import. Responsible for energy coupling to the transport system. The chain is Ribose import ATP-binding protein RbsA from Vibrio parahaemolyticus serotype O3:K6 (strain RIMD 2210633).